Consider the following 353-residue polypeptide: S-adenosylmethionine:tRNA ribosyltransferase-isomerase (353 aa).

The protein belongs to the QueA family. Monomer.

The protein resides in the cytoplasm. It carries out the reaction 7-aminomethyl-7-carbaguanosine(34) in tRNA + S-adenosyl-L-methionine = epoxyqueuosine(34) in tRNA + adenine + L-methionine + 2 H(+). Its pathway is tRNA modification; tRNA-queuosine biosynthesis. In terms of biological role, transfers and isomerizes the ribose moiety from AdoMet to the 7-aminomethyl group of 7-deazaguanine (preQ1-tRNA) to give epoxyqueuosine (oQ-tRNA). The protein is S-adenosylmethionine:tRNA ribosyltransferase-isomerase of Blochmanniella floridana.